Consider the following 257-residue polypeptide: Protein YIPF5 (257 aa).

Topologically, residues 1 to 124 (MSGFDNLNSG…RAADGSIMNE (124 aa)) are cytoplasmic. Residues 75-106 (PTTPQPFYGDSFEEEPPLLEELGINFDHIWQK) form an interaction with Sec23 region. A helical transmembrane segment spans residues 125-145 (TDLAGPVVFCLAFGATLLLAG). Lysine 146 is a topological domain (lumenal). Residues 147 to 167 (IQFGYVYGISAIGCLGMFCLL) traverse the membrane as a helical segment. At 168–173 (NLMSMT) the chain is on the cytoplasmic side. A helical transmembrane segment spans residues 174 to 194 (GVSFGCVASVLGYCLLPMILL). Residues 195–196 (SS) lie on the Lumenal side of the membrane. A helical transmembrane segment spans residues 197–217 (FAVVFSLQGMVGILLTATIIG). The Cytoplasmic segment spans residues 218–236 (WCSFSASKIFISALAMDGQ). The helical transmembrane segment at 237–257 (QLLVAYPCALLYGVFALISVF) threads the bilayer.

It belongs to the YIP1 family. In terms of assembly, interacts with the COPII coat components Sec23 (SEC23A and/or SEC23B) and Sec24 (SEC24A and/or SEC24B). Interacts with YIF1A. May interact with RAB1A. Interacts with YIPF3 and YIPF4. In terms of tissue distribution, ubiquitously expressed.

It localises to the golgi apparatus. It is found in the cis-Golgi network membrane. The protein resides in the cytoplasmic vesicle. Its subcellular location is the COPII-coated vesicle. The protein localises to the endoplasmic reticulum membrane. Functionally, plays a role in transport between endoplasmic reticulum and Golgi. In pancreatic beta cells, required to transport proinsulin from endoplasmic reticulum into the Golgi. In Mus musculus (Mouse), this protein is Protein YIPF5.